We begin with the raw amino-acid sequence, 396 residues long: L-lactate dehydrogenase (396 aa).

An FMN hydroxy acid dehydrogenase domain is found at 1–380; that stretch reads MIISAASDYR…SGDSLVQELG (380 aa). Y24 lines the substrate pocket. 2 residues coordinate FMN: S106 and Q127. Residue Y129 coordinates substrate. Position 155 (T155) interacts with FMN. R164 is a binding site for substrate. Residue K251 participates in FMN binding. H275 (proton acceptor) is an active-site residue. R278 lines the substrate pocket. Position 306-330 (306-330) interacts with FMN; that stretch reads DSGIRNGLDVVRMIALGADTVLLGR.

It belongs to the FMN-dependent alpha-hydroxy acid dehydrogenase family. Requires FMN as cofactor.

It localises to the cell inner membrane. The enzyme catalyses (S)-lactate + A = pyruvate + AH2. In terms of biological role, catalyzes the conversion of L-lactate to pyruvate. Is coupled to the respiratory chain. The polypeptide is L-lactate dehydrogenase (Salmonella arizonae (strain ATCC BAA-731 / CDC346-86 / RSK2980)).